Reading from the N-terminus, the 414-residue chain is V-set and immunoglobulin domain-containing protein 8 (414 aa).

The N-terminal stretch at 1–21 (MRVGGAFHLLLVCLSPALLSA) is a signal peptide. Ig-like V-type domains lie at 22–141 (VRIN…VIVT) and 146–257 (PAVP…VKVS). The Extracellular segment spans residues 22 to 263 (VRINGDGQEV…VKVSDSRRIG (242 aa)). 2 disulfides stabilise this stretch: cysteine 44-cysteine 126 and cysteine 167-cysteine 239. The helical transmembrane segment at 264–284 (VIIGIVLGSLLALGCLAVGIW) threads the bilayer. Topologically, residues 285 to 414 (GLVCCCCGGS…PVQCKNGLLV (130 aa)) are cytoplasmic.

It is found in the membrane. The chain is V-set and immunoglobulin domain-containing protein 8 from Homo sapiens (Human).